Reading from the N-terminus, the 759-residue chain is RNA-binding protein 28 (759 aa).

At A2 the chain carries N-acetylalanine. One can recognise an RRM 1 domain in the interval 4-80 (LTLFVGRLPP…CKINVTVAKK (77 aa)). The disordered stretch occupies residues 84 to 105 (NKTKEKGKNENSECPKKEPKAK). Basic and acidic residues predominate over residues 85 to 101 (KTKEKGKNENSECPKKE). One can recognise an RRM 2 domain in the interval 114–191 (ARLIIRNLSF…RTVAVDWAVA (78 aa)). S122 is subject to Phosphoserine. The interval 201-330 (VSAIGEEKSH…NKKKRKLPSD (130 aa)) is disordered. The segment covering 205–224 (GEEKSHESKHQESVKKKGRE) has biased composition (basic and acidic residues). Composition is skewed to acidic residues over residues 225-256 (EEDM…EEEN) and 284-313 (SEED…EEQE). RRM domains lie at 335–419 (KTVF…LAVT) and 487–597 (TRLC…RSLQ). Residue S397 is modified to Phosphoserine. Residues 594–759 (RSLQKMRSKP…LAKRSKWFDS (166 aa)) form a disordered region. Residues 615–640 (PAKDQQQKAAQHHTEEQSKVPPEQKR) show a composition bias toward basic and acidic residues. A Glycyl lysine isopeptide (Lys-Gly) (interchain with G-Cter in SUMO2) cross-link involves residue K653. Basic residues predominate over residues 689–698 (VKPVHPKKPK). A compositionally biased stretch (polar residues) spans 700-715 (QINQWKQEKQQLSSEQ).

As to quaternary structure, interacts with U1, U2, U4, U5, and U6 spliceosomal small nuclear RNAs (snRNAs). Ubiquitously expressed.

The protein resides in the nucleus. The protein localises to the nucleolus. Nucleolar component of the spliceosomal ribonucleoprotein complexes. The polypeptide is RNA-binding protein 28 (RBM28) (Homo sapiens (Human)).